The primary structure comprises 98 residues: Cobalt transport protein CbiN (98 aa).

Helical transmembrane passes span V6–L26 and S68–Y88.

It belongs to the CbiN family. As to quaternary structure, forms an energy-coupling factor (ECF) transporter complex composed of an ATP-binding protein (A component, CbiO), a transmembrane protein (T component, CbiQ) and 2 possible substrate-capture proteins (S components, CbiM and CbiN) of unknown stoichimetry.

It localises to the cell membrane. Its pathway is cofactor biosynthesis; adenosylcobalamin biosynthesis. Its function is as follows. Part of the energy-coupling factor (ECF) transporter complex CbiMNOQ involved in cobalt import. The chain is Cobalt transport protein CbiN from Methanococcus maripaludis (strain DSM 14266 / JCM 13030 / NBRC 101832 / S2 / LL).